Consider the following 497-residue polypeptide: Glycerol kinase (497 aa).

Residue T12 participates in ADP binding. 3 residues coordinate ATP: T12, T13, and S14. T12 lines the sn-glycerol 3-phosphate pocket. R16 serves as a coordination point for ADP. Residues R82, E83, Y134, and D243 each contribute to the sn-glycerol 3-phosphate site. Positions 82, 83, 134, 243, and 244 each coordinate glycerol. Positions 265 and 308 each coordinate ADP. Residues T265, G308, Q312, and G409 each contribute to the ATP site. Positions 409 and 413 each coordinate ADP.

This sequence belongs to the FGGY kinase family.

The catalysed reaction is glycerol + ATP = sn-glycerol 3-phosphate + ADP + H(+). It participates in polyol metabolism; glycerol degradation via glycerol kinase pathway; sn-glycerol 3-phosphate from glycerol: step 1/1. With respect to regulation, inhibited by fructose 1,6-bisphosphate (FBP). Key enzyme in the regulation of glycerol uptake and metabolism. Catalyzes the phosphorylation of glycerol to yield sn-glycerol 3-phosphate. In Oleidesulfovibrio alaskensis (strain ATCC BAA-1058 / DSM 17464 / G20) (Desulfovibrio alaskensis), this protein is Glycerol kinase.